The sequence spans 172 residues: Diphosphoinositol polyphosphate phosphohydrolase 1 (172 aa).

Met-1 is modified (N-acetylmethionine). Residues Arg-10, 18 to 20, and 39 to 41 each bind substrate; these read KKR and SSR. The Nudix hydrolase domain maps to 17–144; that stretch reads YKKRAACLCF…VQASYFETLR (128 aa). Residues Gly-50 and Glu-66 each contribute to the Mg(2+) site. Positions 51-72 match the Nudix box motif; the sequence is GGMEPEEEPGTAAVREVCEEAG. Glu-69 serves as the catalytic Proton acceptor. Glu-70 contacts Mg(2+). Substrate-binding positions include 89–91, Arg-115, and Lys-133; that span reads RKH.

It belongs to the Nudix hydrolase family. DIPP subfamily. Monomer. The cofactor is Mg(2+). Mn(2+) serves as cofactor. Zn(2+) is required as a cofactor.

Its subcellular location is the cytoplasm. It is found in the nucleus. The enzyme catalyses diphospho-myo-inositol polyphosphate + H2O = myo-inositol polyphosphate + phosphate.. The catalysed reaction is 5-diphospho-1D-myo-inositol 1,2,3,4,6-pentakisphosphate + H2O = 1D-myo-inositol hexakisphosphate + phosphate + H(+). It carries out the reaction 3,5-bis(diphospho)-1D-myo-inositol 1,2,4,6-tetrakisphosphate + H2O = 3-diphospho-1D-myo-inositol 1,2,4,5,6-pentakisphosphate + phosphate + 2 H(+). It catalyses the reaction [phosphate](n+1) + n H2O = (n+1) phosphate + n H(+). The enzyme catalyses P(1),P(5)-bis(5'-adenosyl) pentaphosphate + H2O = ADP + ATP + 2 H(+). The catalysed reaction is P(1),P(6)-bis(5'-adenosyl) hexaphosphate + H2O = 2 ATP + 2 H(+). It carries out the reaction P(1),P(4)-bis(5'-adenosyl) tetraphosphate + H2O = AMP + ATP + 2 H(+). It catalyses the reaction a 5'-end (N(7)-methyl 5'-triphosphoguanosine)-ribonucleoside in mRNA + H2O = N(7)-methyl-GMP + a 5'-end diphospho-ribonucleoside in mRNA + 2 H(+). The enzyme catalyses a 5'-end (N(7)-methyl 5'-triphosphoguanosine)-ribonucleoside in mRNA + H2O = N(7)-methyl-GDP + a 5'-end phospho-ribonucleoside in mRNA + 2 H(+). In terms of biological role, cleaves a beta-phosphate from the diphosphate groups in PP-InsP5 (diphosphoinositol pentakisphosphate) and [PP]2-InsP4 (bisdiphosphoinositol tetrakisphosphate), suggesting that it may play a role in signal transduction. InsP6 (inositol hexakisphosphate) is not a substrate. Also able to catalyze the hydrolysis of dinucleoside oligophosphates, with diadenosine 5',5'''-P1,P6-hexaphosphate (Ap6A) and diadenosine 5',5'''- P1,P5-pentaphosphate (Ap5A) being the preferred substrates. The major reaction products are ADP and p4a from Ap6A and ADP and ATP from Ap5A. Also able to hydrolyze 5- phosphoribose 1-diphosphate. Acts as a decapping enzyme that can hydrolyze both monomethylated and unmethylated capped RNAs. Hydrolyzes monomethylated capped RNA after both the alpha- and beta-phosphates generating m7GMP + ppRNA and m7GDP + pRNA. Modulates the stability of a subset of mRNAs implicated in cell motility. Divalent cations zinc, magnesium and manganese determine its substrate specificity. Exhibits diphosphoinositol polyphosphate phosphohydrolase in the presence of magnesium ions, diadenosine hexaphosphate hydrolase activity in the presence of manganese ions and endopolyphosphatase activity in the presence of zinc ions. Plays an important role in limiting DNA damage and maintaining cell survival upon oxidative stress via its endopolyphosphatase activity. The chain is Diphosphoinositol polyphosphate phosphohydrolase 1 from Bos taurus (Bovine).